The primary structure comprises 137 residues: Large ribosomal subunit protein uL16 (137 aa).

This sequence belongs to the universal ribosomal protein uL16 family. Part of the 50S ribosomal subunit.

Functionally, binds 23S rRNA and is also seen to make contacts with the A and possibly P site tRNAs. In Nitratidesulfovibrio vulgaris (strain ATCC 29579 / DSM 644 / CCUG 34227 / NCIMB 8303 / VKM B-1760 / Hildenborough) (Desulfovibrio vulgaris), this protein is Large ribosomal subunit protein uL16.